The chain runs to 122 residues: Zein-alpha B49 (122 aa).

This sequence belongs to the zein family.

Its function is as follows. Zeins are major seed storage proteins. This chain is Zein-alpha B49, found in Zea mays (Maize).